A 252-amino-acid chain; its full sequence is Putative cytosolic acyl coenzyme A thioester hydrolase-like (252 aa).

2 consecutive HotDog ACOT-type domains span residues 1–90 (MIKE…LSLT) and 146–252 (SYSQ…SVFT).

Homodimer. In terms of tissue distribution, expressed in all tissues examined. Up-regulated in nasopharyngeal carcinoma (at protein level).

The protein resides in the cytoplasm. It carries out the reaction hexadecanoyl-CoA + H2O = hexadecanoate + CoA + H(+). Functionally, acyl-CoA thioesterases are a group of enzymes that catalyze the hydrolysis of acyl-CoAs to the free fatty acid and coenzyme A (CoASH), providing the potential to regulate intracellular levels of acyl-CoAs, free fatty acids and CoASH. The chain is Putative cytosolic acyl coenzyme A thioester hydrolase-like (ACOT7L) from Homo sapiens (Human).